Consider the following 372-residue polypeptide: Putative glutamate--cysteine ligase 2 (372 aa).

It belongs to the glutamate--cysteine ligase type 2 family. YbdK subfamily.

The enzyme catalyses L-cysteine + L-glutamate + ATP = gamma-L-glutamyl-L-cysteine + ADP + phosphate + H(+). ATP-dependent carboxylate-amine ligase which exhibits weak glutamate--cysteine ligase activity. The polypeptide is Putative glutamate--cysteine ligase 2 (Rhodopirellula baltica (strain DSM 10527 / NCIMB 13988 / SH1)).